A 287-amino-acid polypeptide reads, in one-letter code: Glycine--tRNA ligase alpha subunit (287 aa).

The protein belongs to the class-II aminoacyl-tRNA synthetase family. As to quaternary structure, tetramer of two alpha and two beta subunits.

The protein localises to the cytoplasm. The catalysed reaction is tRNA(Gly) + glycine + ATP = glycyl-tRNA(Gly) + AMP + diphosphate. This chain is Glycine--tRNA ligase alpha subunit, found in Campylobacter jejuni subsp. jejuni serotype O:6 (strain 81116 / NCTC 11828).